The primary structure comprises 147 residues: Hemoglobin subunit epsilon (147 aa).

The region spanning 3-147 (HFTAEEKNAI…VANALAHKYH (145 aa)) is the Globin domain. At S51 the chain carries Phosphoserine. H64 and H93 together coordinate heme b.

Belongs to the globin family. As to quaternary structure, heterotetramer of two alpha chains and two epsilon chains in early embryonic hemoglobin Gower-2; two zeta chains and two epsilon chains in early embryonic hemoglobin Gower-1. As to expression, red blood cells.

The epsilon chain is a beta-type chain of early mammalian embryonic hemoglobin. The chain is Hemoglobin subunit epsilon (HBE1) from Sminthopsis crassicaudata (Fat-tailed dunnart).